Reading from the N-terminus, the 636-residue chain is ATP-dependent DNA helicase YoaA (636 aa).

In terms of domain architecture, Helicase ATP-binding spans 10–272 (QLAKAIPGFK…KDTQQLQKCA (263 aa)). ATP is bound at residue 45 to 52 (AGTGTGKT). Residues cysteine 108, cysteine 168, cysteine 173, and cysteine 179 each coordinate [4Fe-4S] cluster. A DEAH box motif is present at residues 225–228 (DEAH).

The protein belongs to the helicase family. DinG subfamily. As to quaternary structure, interacts with the DNA polymerase III subunit Chi (holC), probably as a 1:1 complex. Requires [4Fe-4S] cluster as cofactor. The cofactor is Mg(2+).

The catalysed reaction is Couples ATP hydrolysis with the unwinding of duplex DNA at the replication fork by translocating in the 5'-3' direction. This creates two antiparallel DNA single strands (ssDNA). The leading ssDNA polymer is the template for DNA polymerase III holoenzyme which synthesizes a continuous strand.. It carries out the reaction ATP + H2O = ADP + phosphate + H(+). Its activity is regulated as follows. Non-hydrolyzable ATP analogs ATP-gamma-S and adenylyl-imidodiphosphate (AMP-PNP) inhibit helicase activity. Its function is as follows. DNA-dependent ATPase and 5'-3' DNA helicase. Has single-stranded (ss)DNA-dependent ATPase activity and 5'-3' helicase activity on forked DNA; both activities were measure in a YoaA:HolC (chi) complex. Requires a 20-35 nucleotide (nt) 5'-ssDNA tail; dsDNA with a 20 nt gap is also unwound. Unwinds damaged 3' nascent ends (such as those terminated by 3' azidothymidine (AZT), 3' dideoxy-C or an abasic site on the translocating strand), to promote repair and AZT excision. Without HolC the protein has much lower activity which could be due to YoaA instability or helicase stimulation by HolC. Genetically identified as involved in the repair of replication forks and tolerance of the chain-terminating nucleoside analog AZT. May act in proofreading during nucleotide misincorporation, it appears to aid in the removal of potential A-to-T transversion mutations in ndk mutants. This chain is ATP-dependent DNA helicase YoaA (yoaA), found in Escherichia coli (strain K12).